Reading from the N-terminus, the 1503-residue chain is EF-hand calcium-binding domain-containing protein 5 (1503 aa).

A disordered region spans residues 1-23 (MNESASQEELRPAQENRKEDKER). Basic and acidic residues predominate over residues 8–23 (EELRPAQENRKEDKER). Serine 77 is subject to Phosphoserine. Disordered stretches follow at residues 477–518 (ASKT…EQGP), 544–656 (IEPG…QGPY), and 730–750 (FPET…KSQK). The span at 549 to 561 (HTESTLEQGSSRR) shows a compositional bias: polar residues. Composition is skewed to basic and acidic residues over residues 562-582 (LLTE…HKGS) and 607-622 (GSRR…HKGS). The EF-hand domain maps to 869-904 (RQRLLLEAIFQKWDSDGSGFLDLKEVDELLYTYKEG). Residues aspartate 882, aspartate 884, serine 886, and glutamate 893 each coordinate Ca(2+).

The chain is EF-hand calcium-binding domain-containing protein 5 (EFCAB5) from Homo sapiens (Human).